Here is a 159-residue protein sequence, read N- to C-terminus: Endoribonuclease YbeY (159 aa).

Zn(2+) contacts are provided by H114, H118, and H124.

This sequence belongs to the endoribonuclease YbeY family. Zn(2+) serves as cofactor.

It is found in the cytoplasm. Functionally, single strand-specific metallo-endoribonuclease involved in late-stage 70S ribosome quality control and in maturation of the 3' terminus of the 16S rRNA. This Pectobacterium carotovorum subsp. carotovorum (strain PC1) protein is Endoribonuclease YbeY.